The following is a 79-amino-acid chain: MLVLTRKIGEAVTIGDQIRIMVVEVKGNQVRLGIEAPQDMRIYREEIYLQVQEENRHAADWNLTDLENAVSLLGSGDKE.

It belongs to the CsrA/RsmA family. In terms of assembly, homodimer; the beta-strands of each monomer intercalate to form a hydrophobic core, while the alpha-helices form wings that extend away from the core.

The protein resides in the cytoplasm. Its function is as follows. A translational regulator that binds mRNA to regulate translation initiation and/or mRNA stability. Usually binds in the 5'-UTR at or near the Shine-Dalgarno sequence preventing ribosome-binding, thus repressing translation. Its main target seems to be the major flagellin gene, while its function is anatagonized by FliW. This chain is Translational regulator CsrA, found in Geotalea uraniireducens (strain Rf4) (Geobacter uraniireducens).